We begin with the raw amino-acid sequence, 175 residues long: Putative carbonic anhydrase-like protein YbcF (175 aa).

Belongs to the beta-class carbonic anhydrase family.

The polypeptide is Putative carbonic anhydrase-like protein YbcF (ybcF) (Bacillus subtilis (strain 168)).